A 276-amino-acid polypeptide reads, in one-letter code: Orotidine 5'-phosphate decarboxylase (276 aa).

The active-site Proton donor is K96.

Belongs to the OMP decarboxylase family. Type 2 subfamily.

The enzyme catalyses orotidine 5'-phosphate + H(+) = UMP + CO2. It functions in the pathway pyrimidine metabolism; UMP biosynthesis via de novo pathway; UMP from orotate: step 2/2. This is Orotidine 5'-phosphate decarboxylase from Porphyromonas gingivalis (strain ATCC BAA-308 / W83).